The sequence spans 444 residues: Spermidine/putrescine import ATP-binding protein PotA (444 aa).

An ABC transporter domain is found at 11 to 332 (ISLVDVDKEF…PVNKWVANFI (322 aa)). 43 to 50 (GPSGSGKT) lines the ATP pocket. Residues 111–201 (RIKKKAEEIP…ESFKKKYLTR (91 aa)) are insert.

Belongs to the ABC transporter superfamily. Spermidine/putrescine importer (TC 3.A.1.11.1) family. In terms of assembly, the complex is composed of two ATP-binding proteins (PotA), two transmembrane proteins (PotB and PotC) and a solute-binding protein (PotD).

It is found in the cell membrane. The enzyme catalyses ATP + H2O + polyamine-[polyamine-binding protein]Side 1 = ADP + phosphate + polyamineSide 2 + [polyamine-binding protein]Side 1.. Part of the ABC transporter complex PotABCD involved in spermidine/putrescine import. Responsible for energy coupling to the transport system. The sequence is that of Spermidine/putrescine import ATP-binding protein PotA from Mesomycoplasma hyopneumoniae (strain J / ATCC 25934 / NCTC 10110) (Mycoplasma hyopneumoniae).